Consider the following 483-residue polypeptide: MWYTSTRGMAPRVNFEGALFSGYAPDGGLYMPEELPRLDEETLRHWSTLSYRSLVKELCALFIGLELIPRHDLNDLIDRAFSRFRHRNVVHLCKLKNGLNILELWHGVTYAFKDLSLSCTAQFLQYFLEKKKKHVTIVVGTSGDTGSAAIESVQGSKNVDIIVLLPKGHCSKIQELQMTTVLKENVHVFEVEGNSDELDEPIKAVFADVAFVQRHNVMSLNSINWSRVLVQMAHHFFAYFQCTPSLDTHPLPTVEVVVPTGAGGNLAAGCIAQKMGLPICLVVAVNRNDIIHRTVQKGDFSLCEVLRTTLASAMDIQVPYNMERIFWLLSGSDSQTTRALMEQFERTQSLQLPKDLHNKLSEAVTSESVTDEAITQTMARCWEENQYLLCPHSATAVNYHYQQTDSGQSSIRCCLASASAVKFPEAVQAAGLTPETPAEILALEHKETRCIPMRRGDDWTQMLRVTIEGLSQRWKDCVVNPSE.

Lys113 is modified (N6-(pyridoxal phosphate)lysine).

It belongs to the threonine synthase family. Pyridoxal 5'-phosphate serves as cofactor.

Acts as a catabolic phospho-lyase on both gamma- and beta-phosphorylated substrates. Degrades O-phospho-threonine (PThr) to alpha-ketobutyrate, ammonia and phosphate. Also degrades O-phospho-homoserine (PHS), but this is not its physiological substrate. The sequence is that of Threonine synthase-like 2 (Thnsl2) from Mus musculus (Mouse).